A 71-amino-acid polypeptide reads, in one-letter code: Large ribosomal subunit protein bL28 (71 aa).

It belongs to the bacterial ribosomal protein bL28 family.

In Rubrobacter xylanophilus (strain DSM 9941 / JCM 11954 / NBRC 16129 / PRD-1), this protein is Large ribosomal subunit protein bL28.